We begin with the raw amino-acid sequence, 207 residues long: Prolactin (207 aa).

A signal peptide spans 1 to 20; it reads KSRLYFAVTVLMCAFVSING. 2 cysteine pairs are disulfide-bonded: Cys-66-Cys-180 and Cys-197-Cys-207.

The protein belongs to the somatotropin/prolactin family. Pituitary gland.

The protein localises to the secreted. The sequence is that of Prolactin (prl) from Hypophthalmichthys molitrix (Silver carp).